A 906-amino-acid chain; its full sequence is Protein translocase subunit SecA (906 aa).

ATP-binding positions include glutamine 86, 104 to 108 (GEGKT), and aspartate 511. Basic and acidic residues-rich tracts occupy residues 853 to 865 (HESV…RHDE) and 877 to 888 (VRREGPKVKRND). The disordered stretch occupies residues 853–906 (HESVIDNNQRHDEDEQEEAPKVQQVRREGPKVKRNDPCPCGSGKKYKQCHSKVE). Zn(2+)-binding residues include cysteine 890, cysteine 892, cysteine 901, and histidine 902. Over residues 896–906 (KKYKQCHSKVE) the composition is skewed to basic residues.

This sequence belongs to the SecA family. In terms of assembly, monomer and homodimer. Part of the essential Sec protein translocation apparatus which comprises SecA, SecYEG and auxiliary proteins SecDF-YajC and YidC. Requires Zn(2+) as cofactor.

The protein resides in the cell inner membrane. Its subcellular location is the cytoplasm. It catalyses the reaction ATP + H2O + cellular proteinSide 1 = ADP + phosphate + cellular proteinSide 2.. Functionally, part of the Sec protein translocase complex. Interacts with the SecYEG preprotein conducting channel. Has a central role in coupling the hydrolysis of ATP to the transfer of proteins into and across the cell membrane, serving both as a receptor for the preprotein-SecB complex and as an ATP-driven molecular motor driving the stepwise translocation of polypeptide chains across the membrane. The protein is Protein translocase subunit SecA of Francisella tularensis subsp. mediasiatica (strain FSC147).